A 464-amino-acid chain; its full sequence is Ribosomal protein uS12 methylthiotransferase RimO (464 aa).

The MTTase N-terminal domain maps to 14-125 (PTVAFAHLGC…IVEVLQRVEA (112 aa)). C23, C59, C88, C163, C167, and C170 together coordinate [4Fe-4S] cluster. One can recognise a Radical SAM core domain in the interval 149–378 (TTDQAVAFLK…MALQQPISAE (230 aa)). One can recognise a TRAM domain in the interval 381–452 (HSWVSRTVDV…VYDLSGRIVG (72 aa)).

The protein belongs to the methylthiotransferase family. RimO subfamily. [4Fe-4S] cluster is required as a cofactor.

Its subcellular location is the cytoplasm. It catalyses the reaction L-aspartate(89)-[ribosomal protein uS12]-hydrogen + (sulfur carrier)-SH + AH2 + 2 S-adenosyl-L-methionine = 3-methylsulfanyl-L-aspartate(89)-[ribosomal protein uS12]-hydrogen + (sulfur carrier)-H + 5'-deoxyadenosine + L-methionine + A + S-adenosyl-L-homocysteine + 2 H(+). Its function is as follows. Catalyzes the methylthiolation of an aspartic acid residue of ribosomal protein uS12. The chain is Ribosomal protein uS12 methylthiotransferase RimO from Parasynechococcus marenigrum (strain WH8102).